Reading from the N-terminus, the 794-residue chain is Protein IQ-DOMAIN 32 (794 aa).

The interval 15-101 is disordered; the sequence is CSGGDDTSAD…QSFSVDEKKS (87 aa). Polar residues-rich tracts occupy residues 23 to 33 and 56 to 65; these read ADPNSTALENK and SVVSETTPAS. Phosphoserine occurs at positions 78, 80, 142, 193, and 195. Over residues 80-95 the composition is skewed to polar residues; sequence SPDNNNVSEKQQQSFS. IQ domains lie at 214–242 and 243–265; these read DESV…KVIK and LQAA…CVQA. Residues 230-241 form a calmodulin-binding region; sequence ARRELLRSKKVI. The segment at 277–296 is disordered; the sequence is HSTKDGSRVSATSDKSEPNA. Ser369 is modified (phosphoserine). The tract at residues 375-417 is disordered; that stretch reads VNSDSTVENKTETDMPSYEASKVEGQNVELSETEKMSQYDSPE. Ser459 bears the Phosphoserine mark. 2 disordered regions span residues 472–555 and 578–794; these read ELTS…RVEA and ATSM…KWQR. The span at 473–486 shows a compositional bias: polar residues; it reads LTSSTGSNKAMTLS. Over residues 487–500 the composition is skewed to basic and acidic residues; it reads SKDDVLGEEGKTDI. Phosphoserine is present on residues Ser502 and Ser544. Composition is skewed to basic and acidic residues over residues 539 to 555 and 585 to 607; these read TLEK…RVEA and EDPK…HHEP. The span at 643–654 shows a compositional bias: low complexity; that stretch reads SQATPASQASSS. Residues 657–664 carry the Nuclear localization signal motif; that stretch reads ARKGKSEK. The segment covering 768-786 has biased composition (polar residues); sequence NGKQVSPRIQRSASQAQQG.

This sequence belongs to the IQD family. In terms of assembly, binds to multiple calmodulin (CaM) in the presence of Ca(2+) and CaM-like proteins.

It is found in the nucleus. The protein resides in the cytoplasm. It localises to the cytoskeleton. May be involved in cooperative interactions with calmodulins or calmodulin-like proteins. Recruits calmodulin proteins to microtubules, thus being a potential scaffold in cellular signaling and trafficking. May associate with nucleic acids and regulate gene expression at the transcriptional or post-transcriptional level. The chain is Protein IQ-DOMAIN 32 from Arabidopsis thaliana (Mouse-ear cress).